Here is a 291-residue protein sequence, read N- to C-terminus: Probable xyloglucan endotransglucosylase/hydrolase protein 16 (291 aa).

Positions Met-1–Ser-24 are cleaved as a signal peptide. Residues Gly-25–Tyr-215 enclose the GH16 domain. Glu-101 serves as the catalytic Nucleophile. Glu-105 acts as the Proton donor in catalysis. Glu-105 contacts xyloglucan. A glycan (N-linked (GlcNAc...) asparagine) is linked at Asn-109. Xyloglucan-binding positions include His-118–Asn-120, Asn-128–Glu-130, Asp-194–Trp-195, and Gly-199. Intrachain disulfides connect Cys-223-Cys-232 and Cys-272-Cys-286. Arg-277 contributes to the xyloglucan binding site.

It belongs to the glycosyl hydrolase 16 family. XTH group 2 subfamily. Post-translationally, contains at least one intrachain disulfide bond essential for its enzymatic activity.

The protein localises to the secreted. Its subcellular location is the cell wall. It localises to the extracellular space. The protein resides in the apoplast. The catalysed reaction is breaks a beta-(1-&gt;4) bond in the backbone of a xyloglucan and transfers the xyloglucanyl segment on to O-4 of the non-reducing terminal glucose residue of an acceptor, which can be a xyloglucan or an oligosaccharide of xyloglucan.. Catalyzes xyloglucan endohydrolysis (XEH) and/or endotransglycosylation (XET). Cleaves and religates xyloglucan polymers, an essential constituent of the primary cell wall, and thereby participates in cell wall construction of growing tissues. In Arabidopsis thaliana (Mouse-ear cress), this protein is Probable xyloglucan endotransglucosylase/hydrolase protein 16 (XTH16).